The primary structure comprises 264 residues: Zinc import ATP-binding protein ZnuC (264 aa).

Positions 20–235 (VQLKNIEVTF…PNFIHFFGDQ (216 aa)) constitute an ABC transporter domain. 52-59 (GPNGGGKS) contributes to the ATP binding site.

The protein belongs to the ABC transporter superfamily. Zinc importer (TC 3.A.1.15.5) family. In terms of assembly, the complex is composed of two ATP-binding proteins (ZnuC), two transmembrane proteins (ZnuB) and a solute-binding protein (ZnuA).

The protein resides in the cell inner membrane. The enzyme catalyses Zn(2+)(out) + ATP(in) + H2O(in) = Zn(2+)(in) + ADP(in) + phosphate(in) + H(+)(in). Its function is as follows. Part of the ABC transporter complex ZnuABC involved in zinc import. Responsible for energy coupling to the transport system. This is Zinc import ATP-binding protein ZnuC from Haemophilus ducreyi (strain 35000HP / ATCC 700724).